The chain runs to 137 residues: Peptide methionine sulfoxide reductase MsrB (137 aa).

The region spanning 7-129 (PDHPATELNE…NSASLSFTDG (123 aa)) is the MsrB domain. Zn(2+)-binding residues include cysteine 46, cysteine 49, cysteine 95, and cysteine 98. The active-site Nucleophile is cysteine 118.

This sequence belongs to the MsrB Met sulfoxide reductase family. Requires Zn(2+) as cofactor.

It carries out the reaction L-methionyl-[protein] + [thioredoxin]-disulfide + H2O = L-methionyl-(R)-S-oxide-[protein] + [thioredoxin]-dithiol. This chain is Peptide methionine sulfoxide reductase MsrB, found in Serratia proteamaculans (strain 568).